The chain runs to 375 residues: Trichodiene synthase (375 aa).

It belongs to the trichodiene synthase family.

It catalyses the reaction (2E,6E)-farnesyl diphosphate = trichodiene + diphosphate. It participates in sesquiterpene biosynthesis; trichothecene biosynthesis. TS is a member of the terpene cyclase group of enzymes. It catalyzes the isomerization and cyclization of farnesyl pyro-phosphate to form trichodiene, the first cyclic intermediate in the biosynthetic pathway for trichothecenes. It serves to branch trichothecene biosynthesis from the isoprenoid pathway. This is Trichodiene synthase (TRI5) from Fusarium pseudograminearum (Wheat and barley crown-rot fungus).